We begin with the raw amino-acid sequence, 148 residues long: uncharacterized protein (148 aa).

One can recognise an HTH asnC-type domain in the interval 3-64 (LDALDRKILE…KLNYESIGYD (62 aa)). Residues 22-41 (YREIAKDLNVAVGTIYNRIK) constitute a DNA-binding region (H-T-H motif).

This is an uncharacterized protein from Pyrococcus horikoshii (strain ATCC 700860 / DSM 12428 / JCM 9974 / NBRC 100139 / OT-3).